The chain runs to 106 residues: Small ribosomal subunit protein bS6 (106 aa).

Belongs to the bacterial ribosomal protein bS6 family.

Its function is as follows. Binds together with bS18 to 16S ribosomal RNA. In Cyanothece sp. (strain PCC 7425 / ATCC 29141), this protein is Small ribosomal subunit protein bS6.